Reading from the N-terminus, the 396-residue chain is Stearoyl-[acyl-carrier-protein] 9-desaturase, chloroplastic (396 aa).

Residues M1–M33 constitute a chloroplast transit peptide. A34 carries the blocked amino end (Ala); partial modification. Positions 138, 176, 179, 229, 262, and 265 each coordinate Fe cation.

Belongs to the fatty acid desaturase type 2 family. As to quaternary structure, homodimer. Fe(2+) serves as cofactor. In terms of processing, most of the N-terminus is blocked.

It is found in the plastid. The protein localises to the chloroplast. It catalyses the reaction octadecanoyl-[ACP] + 2 reduced [2Fe-2S]-[ferredoxin] + O2 + 2 H(+) = (9Z)-octadecenoyl-[ACP] + 2 oxidized [2Fe-2S]-[ferredoxin] + 2 H2O. The protein operates within lipid metabolism; fatty acid metabolism. In terms of biological role, converts stearoyl-ACP to oleoyl-ACP by introduction of a cis double bond between carbons 9 and 10 of the acyl chain. The protein is Stearoyl-[acyl-carrier-protein] 9-desaturase, chloroplastic of Carthamus tinctorius (Safflower).